The sequence spans 283 residues: ATP synthase gamma chain (283 aa).

It belongs to the ATPase gamma chain family. In terms of assembly, F-type ATPases have 2 components, CF(1) - the catalytic core - and CF(0) - the membrane proton channel. CF(1) has five subunits: alpha(3), beta(3), gamma(1), delta(1), epsilon(1). CF(0) has three main subunits: a, b and c.

The protein localises to the cell membrane. In terms of biological role, produces ATP from ADP in the presence of a proton gradient across the membrane. The gamma chain is believed to be important in regulating ATPase activity and the flow of protons through the CF(0) complex. The protein is ATP synthase gamma chain of Exiguobacterium sibiricum (strain DSM 17290 / CCUG 55495 / CIP 109462 / JCM 13490 / 255-15).